The primary structure comprises 357 residues: Protein RecA (357 aa).

Residue 67–74 (GPESSGKT) coordinates ATP. A disordered region spans residues 334-357 (ELKPAAAGNSHDEDELAGEGKEEF).

The protein belongs to the RecA family.

Its subcellular location is the cytoplasm. In terms of biological role, can catalyze the hydrolysis of ATP in the presence of single-stranded DNA, the ATP-dependent uptake of single-stranded DNA by duplex DNA, and the ATP-dependent hybridization of homologous single-stranded DNAs. It interacts with LexA causing its activation and leading to its autocatalytic cleavage. This chain is Protein RecA, found in Pectobacterium atrosepticum (strain SCRI 1043 / ATCC BAA-672) (Erwinia carotovora subsp. atroseptica).